The following is a 207-amino-acid chain: Ribosomal RNA small subunit methyltransferase G (207 aa).

Residues Gly-73, Leu-78, 124 to 125, and Arg-139 contribute to the S-adenosyl-L-methionine site; that span reads VE.

The protein belongs to the methyltransferase superfamily. RNA methyltransferase RsmG family.

It localises to the cytoplasm. It carries out the reaction guanosine(527) in 16S rRNA + S-adenosyl-L-methionine = N(7)-methylguanosine(527) in 16S rRNA + S-adenosyl-L-homocysteine. In terms of biological role, specifically methylates the N7 position of guanine in position 527 of 16S rRNA. This Shigella flexneri protein is Ribosomal RNA small subunit methyltransferase G.